A 465-amino-acid polypeptide reads, in one-letter code: MKTLLIFLAFLSSIFASLIGLTPPSKDSFYSPPVGFATAKPGDILKIRNTPSAPSSLYLPIVVKNAWQLLIRSEDSFGNPNAFVATLIQPLNANPSKLVSYQSWEDASHIDCSPSYGMQFKSPATTVTTQIDMTLIVPLLQNGYYVIIPDYEGPKSTFTVGRQSGKATLNSIRAALQTGAFSGIKKTAKVALWGYSGGSLATGWAISLQSKYAPELKENLIGAAVGGFATNITAVAEAVDGTVFSGFIPLALNGLANEYPDFKKRLYGEVKLSARSTMEKGSQNCLAASLVGYPMSQYFTGQNRAFEKGWGLLQDEVFNKTIEDNLLLKLDKTYLPQVPVLIYHGTIDEIIPIKDANAQYQIWCDRGIQSLEFAEDLSAGHLAETFTGAPAALSWIDARFSGKPAVNGCQRTIRSSNVLYPGISITIRIYFEGISKTIFGVNLGSGVNADKSISNKFFAYIRKYI.

An N-terminal signal peptide occupies residues 1-16 (MKTLLIFLAFLSSIFA). Residues cysteine 112 and cysteine 285 are joined by a disulfide bond. Serine 196 functions as the Charge relay system in the catalytic mechanism. Asparagine 231 and asparagine 319 each carry an N-linked (GlcNAc...) asparagine glycan. Active-site charge relay system residues include aspartate 348 and histidine 381. Residues cysteine 364 and cysteine 409 are joined by a disulfide bond.

This sequence belongs to the AB hydrolase superfamily. Lipase family. Class Lip subfamily.

It is found in the secreted. The catalysed reaction is a triacylglycerol + H2O = a diacylglycerol + a fatty acid + H(+). Secreted lipase that is able to hydrolyze both the neutral triacylglycerols and the monopalmitate ester Tween 40, allowing the use of hydrolyzed products as carbon sources. Has broad lipolytic activity, which may be important for colonization and subsequent infection, therefore contributing to the persistence and virulence in human tissue. The chain is Lipase 10 from Candida albicans (strain SC5314 / ATCC MYA-2876) (Yeast).